The chain runs to 248 residues: Ribosomal RNA small subunit methyltransferase J (248 aa).

S-adenosyl-L-methionine-binding positions include 97-98 (RD), 113-114 (ER), and aspartate 167.

Belongs to the methyltransferase superfamily. RsmJ family.

The protein resides in the cytoplasm. The enzyme catalyses guanosine(1516) in 16S rRNA + S-adenosyl-L-methionine = N(2)-methylguanosine(1516) in 16S rRNA + S-adenosyl-L-homocysteine + H(+). In terms of biological role, specifically methylates the guanosine in position 1516 of 16S rRNA. The chain is Ribosomal RNA small subunit methyltransferase J from Aeromonas hydrophila subsp. hydrophila (strain ATCC 7966 / DSM 30187 / BCRC 13018 / CCUG 14551 / JCM 1027 / KCTC 2358 / NCIMB 9240 / NCTC 8049).